The primary structure comprises 35 residues: Kappa-stichotoxin-She3a (35 aa).

The ShKT domain maps to cysteine 3 to cysteine 35. Cystine bridges form between cysteine 3–cysteine 35, cysteine 12–cysteine 28, and cysteine 17–cysteine 32.

The protein belongs to the sea anemone type 1 potassium channel toxin family. Type 1a subfamily.

It localises to the secreted. The protein resides in the nematocyst. In terms of biological role, peptide with both antimicrobial and neurotoxin activities. Inhibits voltage-dependent potassium channels. Potently blocks Kv1.1/KCNA1 (IC(50)=6.7-87 pM) and Kv1.3/KCNA3 (IC(50)=10-250 pM). Less potently blocks Kv1.4/KCNA4 (IC(50)=0.31 nM), and Kv1.6/KCNA6 (IC(50)=0.16 nM). Shows moderate activity on Kv1.2/KCNA2 (IC(50)=9 nM), Kv1.7/KCNA7 (IC(50)=11.5 nM), and KCa3.1/KCNN4 (Kd=0.03-30 nM). Blocks Kv channels by binding to a shallow vestibule at the outer entrance to the ion conduction pathway and occluding the entrance to the pore. Shows antibacterial activity against all tested bacteria (the Gram-positive bacteria B.subtilis and S.aureus, and the Gram-negative bacteria S.typhimurium and P.aeruginosa). In Stichodactyla helianthus (Sun anemone), this protein is Kappa-stichotoxin-She3a.